The primary structure comprises 182 residues: MTLLETTSIAAVSLYGLLSSSYRSVQVLHAFRTLKSETAENTVEESSLPSVDIIVPSFNESPARPVRLPGIPCQPRSYPGMLRVYVADDGSRNRDAVVAEQLAYAGDARFEFIMLPRNVGKRKAQIAAISRSSGDLILNVDSDTTLASDVVSKLSQKMRDPAVGAVMGQLVASNQSDSWLTR.

It belongs to the NodC/HAS family.

The protein resides in the cell membrane. Involved in the synthesis of Nod factor, a sulfated N-acyl-beta-1,4-tetrasaccharide of N-acetylglucosamine which initiates a series of events in the host plant species leading eventually to nodulation. This is N-acetylglucosaminyltransferase (nodC) from Rhizobium leguminosarum bv. trifolii.